The sequence spans 223 residues: Phosphoribosylformylglycinamidine synthase subunit PurQ (223 aa).

A Glutamine amidotransferase type-1 domain is found at 2–223; it reads KFAVLKFPGS…MVNSWREQNV (222 aa). Cys85 (nucleophile) is an active-site residue. Catalysis depends on residues His193 and Glu195.

As to quaternary structure, part of the FGAM synthase complex composed of 1 PurL, 1 PurQ and 2 PurS subunits.

The protein resides in the cytoplasm. The enzyme catalyses N(2)-formyl-N(1)-(5-phospho-beta-D-ribosyl)glycinamide + L-glutamine + ATP + H2O = 2-formamido-N(1)-(5-O-phospho-beta-D-ribosyl)acetamidine + L-glutamate + ADP + phosphate + H(+). The catalysed reaction is L-glutamine + H2O = L-glutamate + NH4(+). It participates in purine metabolism; IMP biosynthesis via de novo pathway; 5-amino-1-(5-phospho-D-ribosyl)imidazole from N(2)-formyl-N(1)-(5-phospho-D-ribosyl)glycinamide: step 1/2. Its function is as follows. Part of the phosphoribosylformylglycinamidine synthase complex involved in the purines biosynthetic pathway. Catalyzes the ATP-dependent conversion of formylglycinamide ribonucleotide (FGAR) and glutamine to yield formylglycinamidine ribonucleotide (FGAM) and glutamate. The FGAM synthase complex is composed of three subunits. PurQ produces an ammonia molecule by converting glutamine to glutamate. PurL transfers the ammonia molecule to FGAR to form FGAM in an ATP-dependent manner. PurS interacts with PurQ and PurL and is thought to assist in the transfer of the ammonia molecule from PurQ to PurL. The sequence is that of Phosphoribosylformylglycinamidine synthase subunit PurQ from Staphylococcus saprophyticus subsp. saprophyticus (strain ATCC 15305 / DSM 20229 / NCIMB 8711 / NCTC 7292 / S-41).